The sequence spans 617 residues: Probable Xaa-Pro aminopeptidase P (617 aa).

4 residues coordinate Mn(2+): D414, D425, E523, and E537.

Belongs to the peptidase M24B family. The cofactor is Mn(2+).

It carries out the reaction Release of any N-terminal amino acid, including proline, that is linked to proline, even from a dipeptide or tripeptide.. Functionally, catalyzes the removal of a penultimate prolyl residue from the N-termini of peptides. This chain is Probable Xaa-Pro aminopeptidase P (AMPP), found in Colletotrichum graminicola (strain M1.001 / M2 / FGSC 10212) (Maize anthracnose fungus).